The primary structure comprises 366 residues: Quinolinate synthase (366 aa).

2 residues coordinate iminosuccinate: His44 and Ser61. Cys108 serves as a coordination point for [4Fe-4S] cluster. Iminosuccinate contacts are provided by residues 139 to 141 and Ser160; that span reads YVN. A [4Fe-4S] cluster-binding site is contributed by Cys228. Iminosuccinate-binding positions include 254-256 and Thr271; that span reads HPE. [4Fe-4S] cluster is bound at residue Cys318.

The protein belongs to the quinolinate synthase family. Type 3 subfamily. It depends on [4Fe-4S] cluster as a cofactor.

It localises to the cytoplasm. It carries out the reaction iminosuccinate + dihydroxyacetone phosphate = quinolinate + phosphate + 2 H2O + H(+). Its pathway is cofactor biosynthesis; NAD(+) biosynthesis; quinolinate from iminoaspartate: step 1/1. Catalyzes the condensation of iminoaspartate with dihydroxyacetone phosphate to form quinolinate. This chain is Quinolinate synthase, found in Staphylococcus carnosus (strain TM300).